The chain runs to 370 residues: Zinc finger protein 830 (370 aa).

2 disordered regions span residues 1–21 (MASS…QEEL) and 75–220 (HRER…LVPH). Ala2 is subject to N-acetylalanine. The stretch at 16-40 (VNQEELRRLMKEKQRLSTNRKRIES) forms a coiled coil. A C2H2-type zinc finger spans residues 53–75 (CALCNTPVKSELLWQTHVLGKQH). Residues 90-99 (QGPSAGTAPQ) show a composition bias toward polar residues. Over residues 104 to 115 (KTTDVESQDAKK) the composition is skewed to basic and acidic residues. The span at 121 to 134 (DQVQPSTSASSANF) shows a compositional bias: polar residues. Positions 156–171 (DYEEEEEEEEEEELGG) are enriched in acidic residues. The span at 172-191 (GEERRDSSKHLPDAQGREHS) shows a compositional bias: basic and acidic residues. The span at 196–212 (RETTSNVLPNDPFNTNP) shows a compositional bias: polar residues. Ser223 carries the post-translational modification Phosphoserine. Residues 310-338 (IECYRRVEKLRNRQDEIKNKLKEVLTIKE) are a coiled coil. Ser349 and Ser360 each carry phosphoserine.

Component of the XAB2 complex, a multimeric protein complex composed of XAB2, PRPF19, AQR, ZNF830, ISY1, and PPIE; this complex binds preferentially to RNA. Interacts with XAB2. Identified in a pentameric intron-binding (IB) complex composed of AQR, XAB2, ISY1, ZNF830 and PPIE that is incorporated into the spliceosome as a preassembled complex. The IB complex does not contain PRPF19. Post-translationally, phosphorylated in response to DNA damage by the cell cycle checkpoint kinases ATR/ATM.

The protein resides in the nucleus. Its subcellular location is the chromosome. It is found in the nucleus speckle. In terms of biological role, may play a role in pre-mRNA splicing as component of the spliceosome. Acts as an important regulator of the cell cycle that participates in the maintenance of genome integrity. During cell cycle progression in embryonic fibroblast, prevents replication fork collapse, double-strand break formation and cell cycle checkpoint activation. Controls mitotic cell cycle progression and cell survival in rapidly proliferating intestinal epithelium and embryonic stem cells. During the embryo preimplantation, controls different aspects of M phase. During early oocyte growth, plays a role in oocyte survival by preventing chromosomal breaks formation, activation of TP63 and reduction of transcription. This Rattus norvegicus (Rat) protein is Zinc finger protein 830.